The primary structure comprises 719 residues: Phosphoribosylformylglycinamidine synthase subunit PurL (719 aa).

His-47 is a catalytic residue. ATP-binding residues include Tyr-50 and Lys-89. Glu-91 is a binding site for Mg(2+). Substrate-binding positions include 92–95 (SHNH) and Arg-114. His-93 functions as the Proton acceptor in the catalytic mechanism. Position 115 (Asp-115) interacts with Mg(2+). Residue Gln-238 coordinates substrate. Asp-266 lines the Mg(2+) pocket. 310–312 (ESQ) serves as a coordination point for substrate. The ATP site is built by Asp-488 and Gly-525. Residue Asn-526 participates in Mg(2+) binding. A substrate-binding site is contributed by Ser-528.

This sequence belongs to the FGAMS family. In terms of assembly, monomer. Part of the FGAM synthase complex composed of 1 PurL, 1 PurQ and 2 PurS subunits.

It localises to the cytoplasm. The enzyme catalyses N(2)-formyl-N(1)-(5-phospho-beta-D-ribosyl)glycinamide + L-glutamine + ATP + H2O = 2-formamido-N(1)-(5-O-phospho-beta-D-ribosyl)acetamidine + L-glutamate + ADP + phosphate + H(+). The protein operates within purine metabolism; IMP biosynthesis via de novo pathway; 5-amino-1-(5-phospho-D-ribosyl)imidazole from N(2)-formyl-N(1)-(5-phospho-D-ribosyl)glycinamide: step 1/2. Part of the phosphoribosylformylglycinamidine synthase complex involved in the purines biosynthetic pathway. Catalyzes the ATP-dependent conversion of formylglycinamide ribonucleotide (FGAR) and glutamine to yield formylglycinamidine ribonucleotide (FGAM) and glutamate. The FGAM synthase complex is composed of three subunits. PurQ produces an ammonia molecule by converting glutamine to glutamate. PurL transfers the ammonia molecule to FGAR to form FGAM in an ATP-dependent manner. PurS interacts with PurQ and PurL and is thought to assist in the transfer of the ammonia molecule from PurQ to PurL. The protein is Phosphoribosylformylglycinamidine synthase subunit PurL of Jannaschia sp. (strain CCS1).